Consider the following 324-residue polypeptide: HPr kinase/phosphorylase (324 aa).

Active-site residues include H146 and K167. 161 to 168 contributes to the ATP binding site; it reads GDSGLGKS. S168 contributes to the Mg(2+) binding site. Catalysis depends on D185, which acts as the Proton acceptor; for phosphorylation activity. Proton donor; for dephosphorylation activity. Residues 209-218 are important for the catalytic mechanism of both phosphorylation and dephosphorylation; it reads LEVRGLGLLD. E210 provides a ligand contact to Mg(2+). R250 is a catalytic residue. The important for the catalytic mechanism of dephosphorylation stretch occupies residues 271–276; it reads QVAAGR.

Belongs to the HPrK/P family. In terms of assembly, homohexamer. Mg(2+) serves as cofactor.

The enzyme catalyses [HPr protein]-L-serine + ATP = [HPr protein]-O-phospho-L-serine + ADP + H(+). It catalyses the reaction [HPr protein]-O-phospho-L-serine + phosphate + H(+) = [HPr protein]-L-serine + diphosphate. Catalyzes the ATP- as well as the pyrophosphate-dependent phosphorylation of a specific serine residue in HPr, a phosphocarrier protein of the phosphoenolpyruvate-dependent sugar phosphotransferase system (PTS). HprK/P also catalyzes the pyrophosphate-producing, inorganic phosphate-dependent dephosphorylation (phosphorolysis) of seryl-phosphorylated HPr (P-Ser-HPr). The chain is HPr kinase/phosphorylase from Ralstonia pickettii (strain 12J).